Reading from the N-terminus, the 225-residue chain is PKHD-type hydroxylase YbiX (225 aa).

In terms of domain architecture, Fe2OG dioxygenase spans 78–177 (TLSTPLFNRY…RVASFMWIQS (100 aa)). Fe cation-binding residues include histidine 96, aspartate 98, and histidine 158. Position 168 (arginine 168) interacts with 2-oxoglutarate.

The cofactor is Fe(2+). Requires L-ascorbate as cofactor.

The chain is PKHD-type hydroxylase YbiX from Shigella dysenteriae serotype 1 (strain Sd197).